The following is a 422-amino-acid chain: 5-hydroxytryptamine receptor 1A (422 aa).

A disordered region spans residues 1 to 23; the sequence is MDVLSPGQGNNTTSPPAPFETGG. Over 1 to 38 the chain is Extracellular; sequence MDVLSPGQGNNTTSPPAPFETGGNTTGISDVTFSYQVI. 3 N-linked (GlcNAc...) asparagine glycosylation sites follow: asparagine 10, asparagine 11, and asparagine 24. Residues 39–59 form a helical membrane-spanning segment; the sequence is TSLLLGTLIFCAVLGNACVVA. The Cytoplasmic segment spans residues 60–73; it reads AIALERSLQNVANY. Residues 74-98 traverse the membrane as a helical segment; sequence LIGSLAVTDLMVSVLVLPMAALYQV. At 99–107 the chain is on the extracellular side; the sequence is LNKWTLGQV. A helical membrane pass occupies residues 108 to 132; that stretch reads TCDLFIALDVLCCTSSILHLCAIAL. Cysteine 109 and cysteine 187 are oxidised to a cystine. Serotonin is bound by residues aspartate 116 and cysteine 120. The short motif at 133–135 is the DRY motif; important for ligand-induced conformation changes element; that stretch reads DRY. At 133-152 the chain is on the cytoplasmic side; sequence DRYWAITDPIDYVNKRTPRR. A helical membrane pass occupies residues 153–174; the sequence is AAALISLTWLIGFLISIPPMLG. Residues 175 to 193 are Extracellular-facing; sequence WRTPEDRSDPDACTISKDH. Residues 194–216 traverse the membrane as a helical segment; that stretch reads GYTIYSTFGAFYIPLLLMLVLYG. The Cytoplasmic portion of the chain corresponds to 217–346; the sequence is RIFRAARFRI…LARERKTVKT (130 aa). The segment at 235–262 is disordered; that stretch reads KTGADTRHGASPAPQPKKSVNGESGSRN. Threonine 314, lysine 345, threonine 346, and glycine 352 together coordinate 1D-myo-inositol 4-phosphate. Residues 347–370 traverse the membrane as a helical segment; that stretch reads LGIIMGTFILCWLPFFIVALVLPF. Over 371–378 the chain is Extracellular; the sequence is CESSCHMP. A helical transmembrane segment spans residues 379 to 403; sequence TLLGAIINWLGYSNSLLNPVIYAYF. The NPxxY motif; important for ligand-induced conformation changes and signaling signature appears at 396 to 400; sequence NPVIY. 3 residues coordinate 1D-myo-inositol 4-phosphate: phenylalanine 403, asparagine 404, and lysine 405. Topologically, residues 404-422 are cytoplasmic; the sequence is NKDFQNAFKKIIKCKFCRQ.

Belongs to the G-protein coupled receptor 1 family. 5-hydroxytryptamine receptor subfamily. HTR1A sub-subfamily. As to quaternary structure, heterodimer; heterodimerizes with GPER1. Interacts with YIF1B. Interacts with GPR39 and GALR1.

It localises to the cell membrane. The protein resides in the cell projection. The protein localises to the dendrite. G-protein coupled receptor activity is regulated by lipids: phosphatidylinositol 4-phosphate increases HTR1A-mediated activity. Functionally, G-protein coupled receptor for 5-hydroxytryptamine (serotonin). Also functions as a receptor for various drugs and psychoactive substances. Ligand binding causes a conformation change that triggers signaling via guanine nucleotide-binding proteins (G proteins) and modulates the activity of downstream effectors, such as adenylate cyclase. HTR1A is coupled to G(i)/G(o) G alpha proteins and mediates inhibitory neurotransmission: signaling inhibits adenylate cyclase activity and activates a phosphatidylinositol-calcium second messenger system that regulates the release of Ca(2+) ions from intracellular stores. Beta-arrestin family members regulate signaling by mediating both receptor desensitization and resensitization processes. This is 5-hydroxytryptamine receptor 1A (HTR1A) from Gorilla gorilla gorilla (Western lowland gorilla).